Here is a 428-residue protein sequence, read N- to C-terminus: Dihydroorotase (428 aa).

The Zn(2+) site is built by His61 and His63. Residues 63–65 (HLR) and Asn95 contribute to the substrate site. Zn(2+)-binding residues include Asp153, His180, and His233. Asn279 is a binding site for substrate. Position 306 (Asp306) interacts with Zn(2+). Asp306 is a catalytic residue. Substrate is bound by residues His310 and 324–325 (FG).

The protein belongs to the metallo-dependent hydrolases superfamily. DHOase family. Class I DHOase subfamily. Zn(2+) is required as a cofactor.

It catalyses the reaction (S)-dihydroorotate + H2O = N-carbamoyl-L-aspartate + H(+). The protein operates within pyrimidine metabolism; UMP biosynthesis via de novo pathway; (S)-dihydroorotate from bicarbonate: step 3/3. In terms of biological role, catalyzes the reversible cyclization of carbamoyl aspartate to dihydroorotate. In Geobacillus kaustophilus (strain HTA426), this protein is Dihydroorotase.